The primary structure comprises 134 residues: Gastrin-releasing peptide (134 aa).

Residues 1-23 form the signal peptide; that stretch reads MRSREVSLVLLALVLCPAPRGSA. Met-50 carries the post-translational modification Methionine amide. A propeptide spanning residues 54–134 is cleaved from the precursor; it reads SVAESPQLRE…QREGGNPQLY (81 aa). Positions 98–134 are disordered; that stretch reads PPRWEPLSIHQPAWDSKDVSNFKDSGSQREGGNPQLY. The span at 119–134 shows a compositional bias: polar residues; that stretch reads FKDSGSQREGGNPQLY.

This sequence belongs to the bombesin/neuromedin-B/ranatensin family.

The protein localises to the secreted. It localises to the cytoplasmic vesicle. The protein resides in the secretory vesicle lumen. It is found in the cell projection. Its subcellular location is the neuron projection. Stimulates the release of gastrin and other gastrointestinal hormones. Contributes to the perception of prurient stimuli and to the transmission of itch signals in the spinal cord that promote scratching behavior. Contributes primarily to nonhistaminergic itch sensation. In one study, shown to act in the amygdala as part of an inhibitory network which inhibits memory specifically related to learned fear. In another study, shown to act on vasoactive intestinal peptide (VIP)-expressing cells in the auditory cortex, most likely via extrasynaptic diffusion from local and long-range sources, to mediate disinhibition of glutamatergic cells via VIP cell-specific GRPR signaling which leads to enhanced auditory fear memories. Contributes to the regulation of food intake. Inhibits voltage-gated sodium channels but enhances voltage-gated potassium channels in hippocampal neurons. Induces sighing by acting directly on the pre-Botzinger complex, a cluster of several thousand neurons in the ventrolateral medulla responsible for inspiration during respiratory activity. In terms of biological role, induces an itch response through activation of receptors present on mast cells, triggering mast cell degranulation. The chain is Gastrin-releasing peptide (GRP) from Ovis aries (Sheep).